Consider the following 214-residue polypeptide: Holliday junction branch migration complex subunit RuvA (214 aa).

Residues 1–63 form a domain I region; that stretch reads MISSLRGTVL…EDSLTLFGFP (63 aa). Residues 64–139 are domain II; it reads GPDELRAFEL…KLFVTQPRAR (76 aa). The interval 139 to 143 is flexible linker; the sequence is RSATS. The tract at residues 144–214 is domain III; that stretch reads AASTVTADVV…AAPTGQAADR (71 aa).

It belongs to the RuvA family. As to quaternary structure, homotetramer. Forms an RuvA(8)-RuvB(12)-Holliday junction (HJ) complex. HJ DNA is sandwiched between 2 RuvA tetramers; dsDNA enters through RuvA and exits via RuvB. An RuvB hexamer assembles on each DNA strand where it exits the tetramer. Each RuvB hexamer is contacted by two RuvA subunits (via domain III) on 2 adjacent RuvB subunits; this complex drives branch migration. In the full resolvosome a probable DNA-RuvA(4)-RuvB(12)-RuvC(2) complex forms which resolves the HJ.

The protein localises to the cytoplasm. Functionally, the RuvA-RuvB-RuvC complex processes Holliday junction (HJ) DNA during genetic recombination and DNA repair, while the RuvA-RuvB complex plays an important role in the rescue of blocked DNA replication forks via replication fork reversal (RFR). RuvA specifically binds to HJ cruciform DNA, conferring on it an open structure. The RuvB hexamer acts as an ATP-dependent pump, pulling dsDNA into and through the RuvAB complex. HJ branch migration allows RuvC to scan DNA until it finds its consensus sequence, where it cleaves and resolves the cruciform DNA. This chain is Holliday junction branch migration complex subunit RuvA, found in Clavibacter michiganensis subsp. michiganensis (strain NCPPB 382).